Consider the following 365-residue polypeptide: Nicotinate N-methyltransferase 1 (365 aa).

Aspartate 232 contacts S-adenosyl-L-methionine.

The protein belongs to the class I-like SAM-binding methyltransferase superfamily. Cation-independent O-methyltransferase family.

The catalysed reaction is nicotinate + S-adenosyl-L-methionine = N-methylnicotinate + S-adenosyl-L-homocysteine. Involved in nicotinate detoxification in planta. Catalyzes the conversion of nicotinate to N-methylnicotinate, which is a detoxified form of endogenous nicotinate in planta. This is Nicotinate N-methyltransferase 1 from Oryza sativa subsp. japonica (Rice).